Here is a 179-residue protein sequence, read N- to C-terminus: Ribosome maturation factor RimM (179 aa).

Residues 97-170 (DGELSWNFFV…LITVELPEGL (74 aa)) form the PRC barrel domain.

The protein belongs to the RimM family. In terms of assembly, binds ribosomal protein uS19.

The protein localises to the cytoplasm. An accessory protein needed during the final step in the assembly of 30S ribosomal subunit, possibly for assembly of the head region. Essential for efficient processing of 16S rRNA. May be needed both before and after RbfA during the maturation of 16S rRNA. It has affinity for free ribosomal 30S subunits but not for 70S ribosomes. The chain is Ribosome maturation factor RimM from Bacteroides thetaiotaomicron (strain ATCC 29148 / DSM 2079 / JCM 5827 / CCUG 10774 / NCTC 10582 / VPI-5482 / E50).